We begin with the raw amino-acid sequence, 366 residues long: Transcription factor MYB61 (366 aa).

HTH myb-type domains follow at residues 9–61 and 62–116; these read KQKL…INYL and RPDL…KKKL. 2 DNA-binding regions (H-T-H motif) span residues 37 to 61 and 89 to 112; these read WSSV…INYL and WSQI…NSSI. A disordered region spans residues 115 to 164; sequence KLKQRGIDPNTHKPISEVESFSDKDKPTTSNNKRSGNDHKSPSSSSATNQ. Residues 124–141 show a composition bias toward basic and acidic residues; that stretch reads NTHKPISEVESFSDKDKP.

As to expression, expressed specifically in guard cells. Expressed in sink tissues, such as xylem, roots and developing seeds.

Its subcellular location is the nucleus. Its function is as follows. Transcription factor that coordinates a small network of downstream target genes required for several aspects of plant growth and development, such as xylem formation and xylem cell differentiation, and lateral root formation. Regulates a specific set of target genes by binding DNA to the AC cis-element 5'-ACCTAC-3'. Functions as a transcriptional regulator of stomatal closure. Plays a role the regulation of stomatal pore size independently of abscisic acid (ABA). Required for seed coat mucilage deposition during the development of the seed coat epidermis. Involved in the induction of trichome initiation and branching by positively regulating GL1 and GL2. Required for gibberellin (GA) biosynthesis and degradation by positively affecting the expression of the enzymes that convert GA9 into the bioactive GA4, as well as the enzymes involved in the degradation of GA4. The sequence is that of Transcription factor MYB61 from Arabidopsis thaliana (Mouse-ear cress).